Consider the following 254-residue polypeptide: Transcription factor CAULIFLOWER (254 aa).

The 61-residue stretch at 1–61 folds into the MADS-box domain; sequence MGRGRVEMKR…GKLFEYSSES (61 aa). The K-box domain occupies 90–180; that stretch reads QTNWSMEYSR…TKQIKERESI (91 aa). Positions 182–191 are enriched in polar residues; sequence RTHQNQSEQQ. A disordered region spans residues 182 to 205; that stretch reads RTHQNQSEQQNRSHHVAPQPQPQL.

Homodimer capable of binding to CArG-box sequences.

It is found in the nucleus. Its function is as follows. Probable transcription factor that promotes early floral meristem identity in synergy with APETALA1, FRUITFULL and LEAFY. Is required subsequently for the transition of an inflorescence meristem into a floral meristem. Seems to be partially redundant to the function of APETALA1. This chain is Transcription factor CAULIFLOWER (CAL), found in Brassica rapa subsp. chinensis (Pak-choi).